The chain runs to 207 residues: Zinc finger protein JAGGED-like (207 aa).

Residues 1–16 (MRADENNTLDLNNLPD) are compositionally biased toward low complexity. The tract at residues 1–20 (MRADENNTLDLNNLPDDPSR) is disordered. A C2H2-type zinc finger spans residues 50-72 (YECRFCSLKFFKSQALGGHMNRH).

As to expression, expressed in the emerging leaf, stamen and carpel primordia. Not expressed in the apical shoot meristem (SAM).

The protein localises to the nucleus. Functionally, acts with JAG to promote growth and patterning in stamens and carpels. Promotes the growth of the abaxial and adaxial sides of floral organs. Promotes the growth of the pollen-bearing microsporangia in anthers, the carpel walls of the gynoecium and the establishment of the correct number of cell layers in carpel walls. Promotes leaf blade growth and trichome development. In Arabidopsis thaliana (Mouse-ear cress), this protein is Zinc finger protein JAGGED-like (JGL).